A 181-amino-acid chain; its full sequence is Calmodulin-like protein 6 (181 aa).

EF-hand domains are found at residues E33–N68, P69–K104, N107–P142, and L143–K178. Residues D156, D158, D160, T162, and E167 each contribute to the Ca(2+) site.

This sequence belongs to the calmodulin family. Calglandulin subfamily. Expressed in prostate, thymus, heart, skeleton muscle, bone marrow and ovary.

Its subcellular location is the cytoplasm. It localises to the nucleus. The protein is Calmodulin-like protein 6 (CALML6) of Homo sapiens (Human).